Here is a 353-residue protein sequence, read N- to C-terminus: Putative glycosyltransferase TagX (353 aa).

It belongs to the glycosyltransferase 2 family.

This is Putative glycosyltransferase TagX (tagX) from Staphylococcus aureus (strain MSSA476).